Here is a 114-residue protein sequence, read N- to C-terminus: FK506-binding protein 1 (114 aa).

One can recognise a PPIase FKBP-type domain in the interval G26–N114.

This sequence belongs to the FKBP-type PPIase family. FKBP1 subfamily.

The protein resides in the cytoplasm. The enzyme catalyses [protein]-peptidylproline (omega=180) = [protein]-peptidylproline (omega=0). With respect to regulation, inhibited by both FK506 and rapamycin. Its function is as follows. PPIases accelerate the folding of proteins. It catalyzes the cis-trans isomerization of proline imidic peptide bonds in oligopeptides. The chain is FK506-binding protein 1 (FPR1) from Candida glabrata (strain ATCC 2001 / BCRC 20586 / JCM 3761 / NBRC 0622 / NRRL Y-65 / CBS 138) (Yeast).